The sequence spans 216 residues: MDNLDLIADEVRKCQKCKLWKFRKNAVPGEGNSKAEIMFIGEAPGENEDIEGKPFVGVAGKLLTRLINEILGLSREDVFITNLVKCRPPNNRDPEEDEILACSPYLTRQIESIRPHIIITLGRHSTSYLFKKMNMKMESIGKVRGKFYTWNIYGYKILVFPTYHPAAALYNPPIRKVLEEDFRKVKEALSSKPITLDNFLYGSGDKGEKGNSNSGK.

Residues Cys-14 and Cys-17 each coordinate [4Fe-4S] cluster. Uracil contacts are provided by residues Gly-41 to Ala-43, Phe-55, and Asn-82. Positions 86 and 102 each coordinate [4Fe-4S] cluster. His-164 contacts uracil.

Belongs to the uracil-DNA glycosylase (UDG) superfamily. Type 4 (UDGa) family. Interacts with the sliding clamp PCNA3 subunit.

It catalyses the reaction Hydrolyzes single-stranded DNA or mismatched double-stranded DNA and polynucleotides, releasing free uracil.. Functionally, removes uracil bases that are present in DNA as a result of either deamination of cytosine or misincorporation of dUMP instead of dTMP. Can remove uracil from double-stranded DNA containing either a U/G or U/A base pair as well as from single-stranded DNA. The sequence is that of Type-4 uracil-DNA glycosylase from Saccharolobus solfataricus (strain ATCC 35092 / DSM 1617 / JCM 11322 / P2) (Sulfolobus solfataricus).